The following is a 444-amino-acid chain: Zinc protease PqqE (444 aa).

The signal sequence occupies residues 1 to 28 (MKHFSVKRLLGLSSVLLVTLGASMHAQS). Residue histidine 78 coordinates Zn(2+). Glutamate 81 acts as the Proton acceptor in catalysis. 2 residues coordinate Zn(2+): histidine 82 and glutamate 158.

Belongs to the peptidase M16 family. Zn(2+) is required as a cofactor.

Its subcellular location is the secreted. With respect to regulation, can function alone, but full activity requires the presence of the non-peptidase homolog YmxG. Virulence factor that cleaves the cytoplasmic domain of the human junctional adhesion molecule A (JAM-A), compromising gastric epithelial barrier function and cell-cell adhesion. Cleavage of JAM-A occurs after Ala-285 or, to a lesser extent, before Ala-285. The polypeptide is Zinc protease PqqE (Helicobacter pylori (strain ATCC 700392 / 26695) (Campylobacter pylori)).